Consider the following 301-residue polypeptide: Protease HtpX (301 aa).

A run of 2 helical transmembrane segments spans residues 4 to 24 (IGLF…VLFI) and 44 to 64 (TGLL…SLAM). H150 is a Zn(2+) binding site. The active site involves E151. Position 154 (H154) interacts with Zn(2+). 2 consecutive transmembrane segments (helical) span residues 165–185 (LIQG…GHFV) and 201–221 (FITS…IVMW). A Zn(2+)-binding site is contributed by E227.

The protein belongs to the peptidase M48B family. Requires Zn(2+) as cofactor.

It localises to the cell inner membrane. This Alkalilimnicola ehrlichii (strain ATCC BAA-1101 / DSM 17681 / MLHE-1) protein is Protease HtpX.